Reading from the N-terminus, the 122-residue chain is Small ribosomal subunit protein uS13 (122 aa).

The disordered stretch occupies residues 94 to 122 (KQLPVRGQRTHTNARTRKGKAKPIAGKKK).

The protein belongs to the universal ribosomal protein uS13 family. As to quaternary structure, part of the 30S ribosomal subunit. Forms a loose heterodimer with protein S19. Forms two bridges to the 50S subunit in the 70S ribosome.

Functionally, located at the top of the head of the 30S subunit, it contacts several helices of the 16S rRNA. In the 70S ribosome it contacts the 23S rRNA (bridge B1a) and protein L5 of the 50S subunit (bridge B1b), connecting the 2 subunits; these bridges are implicated in subunit movement. Contacts the tRNAs in the A and P-sites. This Methylorubrum populi (strain ATCC BAA-705 / NCIMB 13946 / BJ001) (Methylobacterium populi) protein is Small ribosomal subunit protein uS13.